The primary structure comprises 288 residues: UAP56-interacting factor (288 aa).

A UAP56-binding motif motif is present at residues 11-29; the sequence is TIDKIDMSLDDIIKLNKQE. Residues 183-202 form a disordered region; that stretch reads DLPELSKTPPWRTSVSSGGS.

The protein belongs to the UIF family.

It is found in the nucleus. It localises to the nucleoplasm. Its subcellular location is the nucleus speckle. Functionally, required for mRNA export from the nucleus to the cytoplasm. Acts as an adapter that uses the ddx39b/uap56-nfx1 pathway to ensure efficient mRNA export and delivering to the nuclear pore. In Xenopus laevis (African clawed frog), this protein is UAP56-interacting factor (fyttd1).